A 66-amino-acid chain; its full sequence is MRCVPVFVILLLLIASAPTVDAQLKTKDDMPLASFHANVKRTLQILRDKRFCCRTQEVCCEAIKNG.

An N-terminal signal peptide occupies residues 1–19 (MRCVPVFVILLLLIASAPT). Residues 20-48 (VDAQLKTKDDMPLASFHANVKRTLQILRD) constitute a propeptide that is removed on maturation. 4-carboxyglutamate is present on residues Glu57 and Glu61. Position 65 is an asparagine amide (Asn65).

Contains 2 disulfide bonds that can be either 'C1-C3, C2-C4' or 'C1-C4, C2-C3', since these disulfide connectivities have been observed for conotoxins with cysteine framework V (for examples, see AC P0DQQ7 and AC P81755). Expressed by the venom duct.

It is found in the secreted. This chain is Conotoxin mr5.2, found in Conus marmoreus (Marble cone).